We begin with the raw amino-acid sequence, 152 residues long: Transcriptional regulator MraZ (152 aa).

SpoVT-AbrB domains lie at 5–52 (ASAI…PLHE) and 81–124 (AQDC…EESA).

This sequence belongs to the MraZ family. In terms of assembly, forms oligomers.

The protein resides in the cytoplasm. It is found in the nucleoid. The polypeptide is Transcriptional regulator MraZ (Shewanella frigidimarina (strain NCIMB 400)).